Consider the following 598-residue polypeptide: UvrABC system protein C (598 aa).

Residues 14-91 (DSPGCYLHKD…IQKNMPKYNI (78 aa)) form the GIY-YIG domain. In terms of domain architecture, UVR spans 196–231 (DKIIEDLRSKMLAASEEMAFERAAEYRDLISGIATM).

It belongs to the UvrC family. Interacts with UvrB in an incision complex.

It localises to the cytoplasm. Functionally, the UvrABC repair system catalyzes the recognition and processing of DNA lesions. UvrC both incises the 5' and 3' sides of the lesion. The N-terminal half is responsible for the 3' incision and the C-terminal half is responsible for the 5' incision. The protein is UvrABC system protein C of Streptococcus pyogenes serotype M3 (strain ATCC BAA-595 / MGAS315).